Reading from the N-terminus, the 289-residue chain is RING-H2 finger protein ATL29 (289 aa).

Residues Val25 to Cys45 traverse the membrane as a helical segment. An RING-type; atypical zinc finger spans residues Cys110 to Arg152. Positions Thr179 to Asp237 are disordered. Polar residues predominate over residues Gln191–Ser207. Positions Ile208 to Ser219 are enriched in basic and acidic residues.

The protein belongs to the RING-type zinc finger family. ATL subfamily.

It localises to the membrane. The catalysed reaction is S-ubiquitinyl-[E2 ubiquitin-conjugating enzyme]-L-cysteine + [acceptor protein]-L-lysine = [E2 ubiquitin-conjugating enzyme]-L-cysteine + N(6)-ubiquitinyl-[acceptor protein]-L-lysine.. It participates in protein modification; protein ubiquitination. The chain is RING-H2 finger protein ATL29 (ATL29) from Arabidopsis thaliana (Mouse-ear cress).